Reading from the N-terminus, the 768-residue chain is Disabled homolog 2 (768 aa).

The segment covering 1 to 16 has biased composition (polar residues); it reads MSNEVETSTTNGQPDQ. The disordered stretch occupies residues 1–36; it reads MSNEVETSTTNGQPDQQAAPKAPSKKEKKKGSEKTD. N-acetylserine is present on Ser2. Position 2 is a phosphoserine (Ser2). A PID domain is found at 45–196; it reads GDGVKYKAKL…KAEENGSEAL (152 aa). At Tyr170 the chain carries Phosphotyrosine. A Phosphoserine modification is found at Ser193. The segment at 230–447 is required for localization to clathrin-coated pits; it reads ESRDILLVDL…KPGRGRRTAK (218 aa). The disordered stretch occupies residues 285–449; that stretch reads NFFPTPNPDP…GRGRRTAKSS (165 aa). 2 consecutive short sequence motifs (DPF) follow at residues 293–295 and 298–300; these read DPF. Composition is skewed to polar residues over residues 303 to 317, 325 to 334, and 367 to 381; these read PDQS…LTSA, GSLSTPQSKG, and PSSQ…QNGV. Ser326 and Ser328 each carry phosphoserine; in mitosis. Ser401 carries the phosphoserine modification. The segment at 601-731 is sufficient for interaction with GRB2; sequence TISTQSFPQP…GVLSGTKSAD (131 aa). Residues 619 to 627 form a required for interaction with CSK region; the sequence is PPQPPPRNG. A required for interaction with MYO6 region spans residues 649–768; sequence KEVKEMFKDF…HRSPFGNPFA (120 aa). Disordered regions lie at residues 660–682 and 709–768; these read LRQP…SSAF and NKIN…NPFA. Residues 663–671 form a required for interaction with GRB2 and CSK region; sequence PPLVPSRKG. Position 673 is a phosphothreonine (Thr673). Residue Ser675 is modified to Phosphoserine. The tract at residues 708–724 is sufficient for interaction with SH3KBP1 SH3 domain; that stretch reads LNKINEPPKPAPRQGVL. Residues 724–755 show a composition bias toward polar residues; that stretch reads LSGTKSADNSLENPFSKGFSSTNPSVVSQPAS. Residues Ser729 and Ser761 each carry the phosphoserine modification.

As to quaternary structure, can interact (via PID domain) with LDLR, APP, APLP1 and APLP2, and weakly with INPP5D (via NPXY motifs); the interaction is impaired by tyrosine phosphorylation of the respective NPXY motifs. Can weakly interact (via PID domain) with LRP1 (via NPXY motif); the interaction is enhanced by tyrosine phosphorylation of the NPXY motif. Interacts with LRP2 (via NPXY motif); the interaction is not affected by tyrosine phosphorylation of the NPXY motif. Interacts with clathrin; in vitro can assemble clathrin triskelia into polyhedral coats. Interacts with AP2A2, ITGB1, ITGB3, ITGB5, PIAS2, DAB2IP, NOSTRIN, FCHO1, DVL3, EPS15, ITSN1 and EPS15L1. Interacts with SH3KBP1 (via SH3 domains). Interacts with GRB2; competes with SOS1 for binding to GRB2 and the interaction is enhanced by EGF and NT-3 stimulation. Interacts with MAP3K7; the interaction is induced by TGF-beta stimulation and may mediate TGF-beta stimulated JNK activation. Interacts with AXIN1 and PPP1CA; the interactions are mutually exclusive. Interacts with the globular tail of MYO6. Interacts (via DPF motifs) with FCHO2; the interaction is direct and required for DAB2-mediated LDLR endocytosis. Interacts with LRP6; the interaction involves LRP6 phosphorylation by CK2 and sequesters LRP6 towards clathrin-mediated endocytosis. Associates with the TGF-beta receptor complex. Interacts with SMAD2 and SMAD3; the interactions are enhanced upon TGF-beta stimulation. Interacts with GRB2; the interaction is enhanced by EGF and NT-3 stimulation. Interacts with SRC; the interaction is enhanced by EGF stimulation. Interacts with GRB2; the interaction is enhanced by EGF and NT-3 stimulation. Interacts (via NPXY motif) with DAB2 (via PID domain). Post-translationally, phosphorylated. Phosphorylation during mitosis is leading to membrane displacement. There is some ambiguity for the mitotic phosphosite Ser-326/328. In terms of tissue distribution, prostate.

It is found in the cytoplasm. Its subcellular location is the cytoplasmic vesicle. The protein resides in the clathrin-coated vesicle membrane. The protein localises to the membrane. It localises to the clathrin-coated pit. Its function is as follows. Adapter protein that functions as a clathrin-associated sorting protein (CLASP) required for clathrin-mediated endocytosis of selected cargo proteins. Can bind and assemble clathrin, and binds simultaneously to phosphatidylinositol 4,5-bisphosphate (PtdIns(4,5)P2) and cargos containing non-phosphorylated NPXY internalization motifs, such as the LDL receptor, to recruit them to clathrin-coated pits. Can function in clathrin-mediated endocytosis independently of the AP-2 complex. Involved in endocytosis of integrin beta-1; this function seems to redundant with the AP-2 complex and seems to require DAB2 binding to endocytosis accessory EH domain-containing proteins such as EPS15, EPS15L1 and ITSN1. Involved in endocytosis of cystic fibrosis transmembrane conductance regulator/CFTR. Involved in endocytosis of megalin/LRP2 lipoprotein receptor during embryonal development. Required for recycling of the TGF-beta receptor. Involved in CFTR trafficking to the late endosome. Involved in several receptor-mediated signaling pathways. Involved in TGF-beta receptor signaling and facilitates phosphorylation of the signal transducer SMAD2. Mediates TFG-beta-stimulated JNK activation. May inhibit the canoniocal Wnt/beta-catenin signaling pathway by stabilizing the beta-catenin destruction complex through a competing association with axin preventing its dephosphorylation through protein phosphatase 1 (PP1). Sequesters LRP6 towards clathrin-mediated endocytosis, leading to inhibition of Wnt/beta-catenin signaling. May activate non-canonical Wnt signaling. In cell surface growth factor/Ras signaling pathways proposed to inhibit ERK activation by interrupting the binding of GRB2 to SOS1 and to inhibit SRC by preventing its activating phosphorylation at 'Tyr-419'. Proposed to be involved in modulation of androgen receptor (AR) signaling mediated by SRC activation; seems to compete with AR for interaction with SRC. Plays a role in the CSF-1 signal transduction pathway. Plays a role in cellular differentiation. Involved in cell positioning and formation of visceral endoderm (VE) during embryogenesis and proposed to be required in the VE to respond to Nodal signaling coming from the epiblast. Required for the epithelial to mesenchymal transition, a process necessary for proper embryonic development. May be involved in myeloid cell differentiation and can induce macrophage adhesion and spreading. May act as a tumor suppressor. The chain is Disabled homolog 2 (Dab2) from Rattus norvegicus (Rat).